A 539-amino-acid polypeptide reads, in one-letter code: MAKIINFNDEARKKLEIGVNTLADAVKVTLGPRGRNVVLEKSYGAPLITNDGVTIAKEIELEDPFENMGAALVKEVAIKSNDVAGDGTTTATILAQAIVKEGLKMLSAGANPIFLKKGIELAAKEAVEVLKDKAKKIESNEEISQVASISAGDEEIGKLIAQAMAKVGETGVITVEEAKSLETTLEIVEGMQFDKGYVSPYMVTDSERMTAELDNPLILLTDKKISSMKELLPLLEQTVQMSKPVLIVADDIEGEALTTLVINKLRGTLNVVAVKAPAFGDRRKAILEDIAILTGGEVISEEKGMKLEEATIEQLGKAKTVKVTKDLTVIVDGGGQQKDISARVNSIKAQIAETTSDYDKEKLQERLAKLSGGVAVIKVGAATEVEMKDKKLRIEDALNATRAAVEEGIVAGGGTILLDIIESMKDFNETDEIAMGIEIVKRALEAPIKQIAENCGLNGGVVLEKVRMSPKGFGFDAKNEKYVNMIESGIIDPAKVTRAAIQNSTSVASLLLTTEVVIANKKEEEKAPMGAGGMMPGMM.

ATP is bound by residues 29-32 (TLGP), 86-90 (DGTTT), glycine 413, and aspartate 492.

This sequence belongs to the chaperonin (HSP60) family. As to quaternary structure, forms a cylinder of 14 subunits composed of two heptameric rings stacked back-to-back. Interacts with the co-chaperonin GroES.

Its subcellular location is the cytoplasm. It carries out the reaction ATP + H2O + a folded polypeptide = ADP + phosphate + an unfolded polypeptide.. Together with its co-chaperonin GroES, plays an essential role in assisting protein folding. The GroEL-GroES system forms a nano-cage that allows encapsulation of the non-native substrate proteins and provides a physical environment optimized to promote and accelerate protein folding. The polypeptide is Chaperonin GroEL (Fusobacterium nucleatum subsp. nucleatum (strain ATCC 25586 / DSM 15643 / BCRC 10681 / CIP 101130 / JCM 8532 / KCTC 2640 / LMG 13131 / VPI 4355)).